The primary structure comprises 189 residues: Peptidyl-tRNA hydrolase (189 aa).

Catalysis depends on histidine 19, which acts as the Proton acceptor. TRNA contacts are provided by tyrosine 64, asparagine 66, and asparagine 112.

Belongs to the PTH family. Monomer.

It is found in the cytoplasm. It carries out the reaction an N-acyl-L-alpha-aminoacyl-tRNA + H2O = an N-acyl-L-amino acid + a tRNA + H(+). Functionally, hydrolyzes ribosome-free peptidyl-tRNAs (with 1 or more amino acids incorporated), which drop off the ribosome during protein synthesis, or as a result of ribosome stalling. In terms of biological role, catalyzes the release of premature peptidyl moieties from peptidyl-tRNA molecules trapped in stalled 50S ribosomal subunits, and thus maintains levels of free tRNAs and 50S ribosomes. The sequence is that of Peptidyl-tRNA hydrolase from Gluconobacter oxydans (strain 621H) (Gluconobacter suboxydans).